A 402-amino-acid polypeptide reads, in one-letter code: Protein indeterminate-domain 12 (402 aa).

A disordered region spans residues 47-66 (TETHKPKKKRGLPGNPDPDA). The residue at position 72 (S72) is a Phosphoserine. C2H2-type zinc fingers lie at residues 82 to 104 (FVCE…RRGH) and 124 to 154 (YVCP…CRKH). Residues 146-153 (IKKHFCRK) carry the Nuclear localization signal motif. The C2H2-type 2; degenerate zinc finger occupies 159 to 183 (WKCEKCSKFYAVQSDWKAHTKICGT). Residues C161, C164, H177, C181, C188, C190, H203, and C207 each coordinate Zn(2+). The CCHC-type 2; atypical zinc finger occupies 186–209 (YRCDCGTLFSRKDTFITHRAFCDA). Positions 196–208 (RKDTFITHRAFCD) are SHR-binding.

The protein localises to the nucleus. In terms of biological role, probable transcription factor. This Arabidopsis thaliana (Mouse-ear cress) protein is Protein indeterminate-domain 12.